The primary structure comprises 334 residues: Ketol-acid reductoisomerase (NADP(+)) (334 aa).

The 181-residue stretch at 1-181 (MTTVYYDQSV…GATRAGVLET (181 aa)) folds into the KARI N-terminal Rossmann domain. Residues 25 to 28 (YGSQ), arginine 48, serine 52, and 82 to 85 (DEIQ) contribute to the NADP(+) site. Histidine 107 is a catalytic residue. Glycine 133 lines the NADP(+) pocket. Residues 182–327 (SFKEETETDL…RELRDMMPFI (146 aa)) form the KARI C-terminal knotted domain. Mg(2+) contacts are provided by aspartate 190, glutamate 194, glutamate 226, and glutamate 230. Serine 251 is a binding site for substrate.

The protein belongs to the ketol-acid reductoisomerase family. The cofactor is Mg(2+).

It carries out the reaction (2R)-2,3-dihydroxy-3-methylbutanoate + NADP(+) = (2S)-2-acetolactate + NADPH + H(+). It catalyses the reaction (2R,3R)-2,3-dihydroxy-3-methylpentanoate + NADP(+) = (S)-2-ethyl-2-hydroxy-3-oxobutanoate + NADPH + H(+). It functions in the pathway amino-acid biosynthesis; L-isoleucine biosynthesis; L-isoleucine from 2-oxobutanoate: step 2/4. It participates in amino-acid biosynthesis; L-valine biosynthesis; L-valine from pyruvate: step 2/4. Its function is as follows. Involved in the biosynthesis of branched-chain amino acids (BCAA). Catalyzes an alkyl-migration followed by a ketol-acid reduction of (S)-2-acetolactate (S2AL) to yield (R)-2,3-dihydroxy-isovalerate. In the isomerase reaction, S2AL is rearranged via a Mg-dependent methyl migration to produce 3-hydroxy-3-methyl-2-ketobutyrate (HMKB). In the reductase reaction, this 2-ketoacid undergoes a metal-dependent reduction by NADPH to yield (R)-2,3-dihydroxy-isovalerate. The sequence is that of Ketol-acid reductoisomerase (NADP(+)) from Staphylococcus saprophyticus subsp. saprophyticus (strain ATCC 15305 / DSM 20229 / NCIMB 8711 / NCTC 7292 / S-41).